Reading from the N-terminus, the 484-residue chain is Major extracellular endoglucanase (484 aa).

Positions 1–25 are cleaved as a signal peptide; it reads MSIFRTASTLALATALALAAGPAFS. Residue Glu-182 is the Proton donor of the active site. Glu-303 serves as the catalytic Nucleophile. Residues 370-402 form a disordered region; sequence GTAGNTTPTPTPTPTPTPTPTPTPTPTPTPGTS. Residues 375–399 form a thr-Pro repeats ('hinge') (Pro-Thr box) region; it reads TTPTPTPTPTPTPTPTPTPTPTPTP. A compositionally biased stretch (pro residues) spans 378-398; that stretch reads TPTPTPTPTPTPTPTPTPTPT. Positions 395–484 constitute a CBM2 domain; that stretch reads PTPTPGTSTF…TAEFGFCAAS (90 aa).

This sequence belongs to the glycosyl hydrolase 5 (cellulase A) family.

The catalysed reaction is Endohydrolysis of (1-&gt;4)-beta-D-glucosidic linkages in cellulose, lichenin and cereal beta-D-glucans.. This is Major extracellular endoglucanase (engXCA) from Xanthomonas campestris pv. campestris (strain ATCC 33913 / DSM 3586 / NCPPB 528 / LMG 568 / P 25).